The following is a 788-amino-acid chain: Diacylglycerol kinase gamma (788 aa).

The span at 83 to 93 (PRQETPDHPKE) shows a compositional bias: basic and acidic residues. The segment at 83–150 (PRQETPDHPK…WGEPNAPASS (68 aa)) is disordered. The span at 95–109 (ASSSEPNVSDSNAES) shows a compositional bias: polar residues. 2 EF-hand domains span residues 172–207 (RPQD…MLHV) and 217–252 (ELRP…TIPL). Asp-185, Asp-187, Asn-189, Glu-196, Asp-230, Asn-232, Asp-234, and Glu-241 together coordinate Ca(2+). 2 consecutive Phorbol-ester/DAG-type zinc fingers follow at residues 268 to 318 (RHAW…IPGC) and 333 to 380 (QHAW…STAC). The DAGKc domain occupies 427 to 561 (PGTHPLLVLV…LDRWYLEVMP (135 aa)). Positions 768–788 (MMGPPQKSSFFSLRRKSRSKD) are disordered.

It belongs to the eukaryotic diacylglycerol kinase family. In terms of tissue distribution, expressed specifically in brain. Highly expressed in cerebellar Purkinje cells (at protein level).

The protein resides in the membrane. It is found in the cytoplasm. Its subcellular location is the cytosol. It localises to the cytoskeleton. The enzyme catalyses a 1,2-diacyl-sn-glycerol + ATP = a 1,2-diacyl-sn-glycero-3-phosphate + ADP + H(+). It catalyses the reaction 1,2-didecanoyl-sn-glycerol + ATP = 1,2-didecanoyl-sn-glycero-3-phosphate + ADP + H(+). The catalysed reaction is 1,2-di-(9Z-octadecenoyl)-sn-glycerol + ATP = 1,2-di-(9Z-octadecenoyl)-sn-glycero-3-phosphate + ADP + H(+). It carries out the reaction 1-octadecanoyl-2-(9Z,12Z)-octadecadienoyl-sn-glycerol + ATP = 1-octadecanoyl-2-(9Z,12Z-octadecadienoyl)-sn-glycero-3-phosphate + ADP + H(+). The enzyme catalyses 1-octadecanoyl-2-(5Z,8Z,11Z,14Z-eicosatetraenoyl)-sn-glycerol + ATP = 1-octadecanoyl-2-(5Z,8Z,11Z,14Z-eicosatetraenoyl)-sn-glycero-3-phosphate + ADP + H(+). It functions in the pathway lipid metabolism; glycerolipid metabolism. With respect to regulation, the activity is calcium-dependent. Requires phosphatidylserine for maximal activity. Functionally, diacylglycerol kinase that converts diacylglycerol/DAG into phosphatidic acid/phosphatidate/PA and regulates the respective levels of these two bioactive lipids. Thereby, acts as a central switch between the signaling pathways activated by these second messengers with different cellular targets and opposite effects in numerous biological processes. Has no apparent specificity with regard to the acyl compositions of diacylglycerol. Specifically expressed in the cerebellum where it controls the level of diacylglycerol which in turn regulates the activity of protein kinase C gamma. Through protein kinase C gamma, indirectly regulates the dendritic development of Purkinje cells, cerebellar long term depression and ultimately cerebellar motor coordination. This is Diacylglycerol kinase gamma (Dgkg) from Rattus norvegicus (Rat).